The primary structure comprises 84 residues: Short neurotoxin SNTX-1 (84 aa).

Positions 1–21 (MKTLLLILVVVTIVCLDLVCC) are cleaved as a signal peptide. 4 disulfide bridges follow: Cys-25–Cys-46, Cys-39–Cys-63, Cys-65–Cys-76, and Cys-77–Cys-82.

The protein belongs to the three-finger toxin family. Short-chain subfamily. Type I alpha-neurotoxin sub-subfamily. In terms of tissue distribution, expressed by the venom gland.

The protein resides in the secreted. In terms of biological role, binds to muscle nicotinic acetylcholine receptor (nAChR) and inhibit acetylcholine from binding to the receptor, thereby impairing neuromuscular transmission. The chain is Short neurotoxin SNTX-1 from Demansia vestigiata (Lesser black whip snake).